Here is a 341-residue protein sequence, read N- to C-terminus: Anthranilate phosphoribosyltransferase (341 aa).

Residues glycine 83, 86–87 (GD), threonine 91, 93–96 (NIST), 111–119 (KHGNRGVSS), and serine 123 each bind 5-phospho-alpha-D-ribose 1-diphosphate. Glycine 83 lines the anthranilate pocket. A Mg(2+)-binding site is contributed by serine 95. Asparagine 114 is a binding site for anthranilate. Arginine 169 is an anthranilate binding site. Aspartate 228 and glutamate 229 together coordinate Mg(2+).

The protein belongs to the anthranilate phosphoribosyltransferase family. Homodimer. Mg(2+) is required as a cofactor.

It carries out the reaction N-(5-phospho-beta-D-ribosyl)anthranilate + diphosphate = 5-phospho-alpha-D-ribose 1-diphosphate + anthranilate. It participates in amino-acid biosynthesis; L-tryptophan biosynthesis; L-tryptophan from chorismate: step 2/5. In terms of biological role, catalyzes the transfer of the phosphoribosyl group of 5-phosphorylribose-1-pyrophosphate (PRPP) to anthranilate to yield N-(5'-phosphoribosyl)-anthranilate (PRA). The chain is Anthranilate phosphoribosyltransferase from Cupriavidus necator (strain ATCC 17699 / DSM 428 / KCTC 22496 / NCIMB 10442 / H16 / Stanier 337) (Ralstonia eutropha).